Consider the following 172-residue polypeptide: Large ribosomal subunit protein uL10 (172 aa).

The protein belongs to the universal ribosomal protein uL10 family. In terms of assembly, part of the ribosomal stalk of the 50S ribosomal subunit. The N-terminus interacts with L11 and the large rRNA to form the base of the stalk. The C-terminus forms an elongated spine to which L12 dimers bind in a sequential fashion forming a multimeric L10(L12)X complex.

Functionally, forms part of the ribosomal stalk, playing a central role in the interaction of the ribosome with GTP-bound translation factors. The chain is Large ribosomal subunit protein uL10 from Leifsonia xyli subsp. xyli (strain CTCB07).